A 3082-amino-acid chain; its full sequence is Autotransporter adhesin BadA (3082 aa).

The signal sequence occupies residues 1 to 47; it reads MKKLSVTSKRQYNLYASPISRRLSLLMKLSLETVTVMFLLGASPVLA. A binds to host cells region spans residues 48 to 376; that stretch reads SNLALTGAKN…DAVNVAQLKA (329 aa). The tract at residues 48–2901 is surface exposed passenger domain; the sequence is SNLALTGAKN…KVQDIATVAD (2854 aa). Positions 53-2850 are does not bind host cells, no host proangiogenic cytokine induction, collagen or fibronectin, no autoagglutination; sequence TGAKNLSQNS…DARHNGVDSK (2798 aa). Positions 470 to 2850 are required to bind fibronectin, not required for surface expression on bacteria, bacterial autoagglutination, host cell binding, collagen binding or host proangiogenic cytokine induction; that stretch reads ITGVAEGTDA…DARHNGVDSK (2381 aa). The tract at residues 2902–3027 is outer membrane translocation of the passenger domain; sequence SAVKYEKDST…VSNLRYYDIP (126 aa). The next 4 membrane-spanning stretches (beta stranded) occupy residues 3028 to 3039, 3044 to 3051, 3055 to 3065, and 3070 to 3082; these read GSLSLSFGTGIW, AFAIGAGY, DGNIRSNLSIT, and QWGV…LRLK. The translocator domain stretch occupies residues 3028-3082; sequence GSLSLSFGTGIWRSQSAFAIGAGYTSEDGNIRSNLSITSSGGQWGVGAGITLRLK.

The protein belongs to the autotransporter-2 (AT-2) (TC 1.B.40) family. As to quaternary structure, homotrimer. Crystals of the head region form trimers.

Its subcellular location is the cell surface. It localises to the cell outer membrane. Mediates bacterial adherence to host endothelial cells and host extracellular matrix proteins (collagen type I, III, IV, laminin and fibronectin). Static versus dynamic adherence results differ slightly; in dynamic adherence studies bacteria bind to fixed components under a constant defined flow rate to simulate in vivo infection conditions. Induces secretion of host proangiogenic cytokines such as VEGFA, ADM, IGFBP-3 and IL-8. May prevent bacterial phagocytosis by macrophages. Probably mediates bacterial autoagglutination. Negatively impacts type IV secretion system effectors (VirB/D4 T4SS and its substrate Bep proteins), possibly by preventing close association of host and bacterial cells. This implies the 2 factors are expressed at different times during infection. The polypeptide is Autotransporter adhesin BadA (Bartonella henselae (Rochalimaea henselae)).